A 280-amino-acid chain; its full sequence is Cell envelope integrity protein EipB (280 aa).

The first 24 residues, methionine 1–alanine 24, serve as a signal peptide directing secretion. Cysteine 69 and cysteine 278 are disulfide-bonded.

As to quaternary structure, monomer.

It is found in the periplasm. Functionally, functions in the periplasm to maintain cell envelope integrity. The protein is Cell envelope integrity protein EipB of Brucella abortus (strain 2308).